A 492-amino-acid polypeptide reads, in one-letter code: GTPase Der (492 aa).

EngA-type G domains lie at 3 to 167 (FTLA…DAYA) and 201 to 381 (LQVA…EVWN). Residues 9–16 (GRPNVGKS), 56–60 (DTAGL), 119–122 (NKAE), 207–214 (GRPNAGKS), 259–263 (DTAGM), and 324–327 (NKWD) contribute to the GTP site. Residues 382–468 (RRVTTAQLNR…RLWMRGQNDA (87 aa)) enclose the KH-like domain. The interval 462–492 (MRGQNDANPYKGRKKAPPSKLRKHTDGRRKD) is disordered. Over residues 472 to 492 (KGRKKAPPSKLRKHTDGRRKD) the composition is skewed to basic residues.

The protein belongs to the TRAFAC class TrmE-Era-EngA-EngB-Septin-like GTPase superfamily. EngA (Der) GTPase family. As to quaternary structure, associates with the 50S ribosomal subunit.

Its function is as follows. GTPase that plays an essential role in the late steps of ribosome biogenesis. The chain is GTPase Der from Roseobacter denitrificans (strain ATCC 33942 / OCh 114) (Erythrobacter sp. (strain OCh 114)).